The sequence spans 441 residues: Serine/threonine-protein phosphatase 4 regulatory subunit 2 (441 aa).

The span at 201–213 shows a compositional bias: acidic residues; the sequence is DEEEGFFDGDEDR. 3 disordered regions span residues 201 to 220, 242 to 348, and 364 to 418; these read DEEE…NKSK, INDD…LTTP, and SPSS…SQED. A compositionally biased stretch (polar residues) spans 249-261; sequence NKGQNCQSDVTKN. Positions 264–302 are enriched in acidic residues; the sequence is DDEDDDDNDDDYREDGADEDDEDDDHMGSTDDDEDDDED. Residue threonine 347 is modified to Phosphothreonine. Residues 388-398 show a composition bias toward basic and acidic residues; that stretch reads EDAHENHEGRS.

This sequence belongs to the PPP4R2 family. In terms of assembly, regulatory subunit (R2) of the histone H2A phosphatase complex (HTP-C) consisting of PPH3, PSY2 and PSY4. Interacts with SPT4 and SPT5.

It is found in the nucleus. Functionally, regulatory subunit of the histone H2A phosphatase complex, which dephosphorylates H2AS128ph (gamma-H2A) that has been displaced from sites of DNA lesions in the double-stranded DNA break repair process. Dephosphorylation is necessary for efficient recovery from the DNA damage checkpoint. This chain is Serine/threonine-protein phosphatase 4 regulatory subunit 2 (PSY4), found in Saccharomyces cerevisiae (strain ATCC 204508 / S288c) (Baker's yeast).